The primary structure comprises 466 residues: 5-hydroxytryptamine receptor (466 aa).

Residues 1–21 (MNASRLPGFNDTSQDQPYPTS) form a disordered region. Residues 1-66 (MNASRLPGFN…TSFVLMAVTS (66 aa)) lie on the Extracellular side of the membrane. Residues asparagine 2, asparagine 10, asparagine 29, asparagine 41, asparagine 45, and asparagine 50 are each glycosylated (N-linked (GlcNAc...) asparagine). The segment covering 10–21 (NDTSQDQPYPTS) has biased composition (polar residues). The chain crosses the membrane as a helical span at residues 67–89 (VVLALIILATIVGNVFVIAAIII). Residues 90-99 (ERNLQNVANY) lie on the Cytoplasmic side of the membrane. The helical transmembrane segment at 100–121 (LVASLAVADLMVACLVMPLGAV) threads the bilayer. Residues 122-136 (YEVSQGWILGPELCD) are Extracellular-facing. A disulfide bridge links cysteine 135 with cysteine 215. A helical membrane pass occupies residues 137 to 158 (MWTSSDVLCSSASILHLVAIAT). Residues 159-177 (DRYWAVTDVDYIHIRNEKR) are Cytoplasmic-facing. The chain crosses the membrane as a helical span at residues 178–200 (IFTMIVLVWGAALVVSLAPQLGW). Residues 201 to 228 (KDPDYLARITQQQKCLVSQDLAYQIFAT) are Extracellular-facing. A helical transmembrane segment spans residues 229–250 (MSTFYVPLAVILILYWKIFQTA). Residues 251–386 (RRRIRRRRDP…AKRERKAAKT (136 aa)) are Cytoplasmic-facing. 2 disordered regions span residues 255 to 282 (RRRR…QSAR) and 339 to 360 (VPPS…KPER). The segment covering 339-353 (VPPSVSPEKSSSTVT) has biased composition (low complexity). Residues 387–410 (LAIITGAFVFCWLPFFIMALVMPI) form a helical membrane-spanning segment. The Extracellular segment spans residues 411 to 419 (CQTCVISDY). The helical transmembrane segment at 420–442 (LASFFLWLGYFNSTLNPVIYTIF) threads the bilayer. The Cytoplasmic segment spans residues 443-466 (SPDFRQAFARILFGTHRRRRYKKF).

Belongs to the G-protein coupled receptor 1 family.

The protein resides in the cell membrane. Functionally, this is a receptor for 5-hydroxytryptamine (serotonin), a biogenic hormone that function as a neurotransmitter, a hormone, and a mitogen. This chain is 5-hydroxytryptamine receptor, found in Heliothis virescens (Tobacco budworm moth).